The primary structure comprises 1285 residues: Dermonecrotic toxin (1285 aa).

Residues 402–422 (MLVPAVGIPINFALSATALGL) traverse the membrane as a helical segment.

It localises to the cytoplasm. Its subcellular location is the secreted. The protein resides in the host membrane. Its function is as follows. This is a dermonecrotic toxin. This osteolytic toxin, induces bone resorption. Potent mitogen. This toxin is associated with the severe progressive form of the atrophic rhinitis, a major respiratory disease in pigs. This Pasteurella multocida protein is Dermonecrotic toxin (toxA).